Reading from the N-terminus, the 702-residue chain is MNSLFASTARGLEELLKTELENLGAVECQVVQGGVHFKGDTRLVYQSLMWSRLASRIMLPLGECKVYSDLDLYLGVQAINWTEMFNPGATFAVHFSGLNDTIRNSQYGAMKVKDAIVDAFTRKNLPRPNVDRDAPDIRVNVWLHKETASIALDLSGDGLHLRGYRDRAGIAPIKETLAAAIVMRSGWQSGTPLLDPMCGSGTLLIEAAMLATDRAPGLHRGRWGFSGWAQHDEAIWQEVKAEAQTRARKGLAEYSSHFYGSDSDARVIQRARTNARLAGIGELITFEVKDVAQLTNPLPKGPYGTVLSNPPYGERLDSEPALIALHSLLGRIMKNQFGGWNLSLFSASPDLLSCLQLRADKQYKAKNGPLDCVQKNYHVAESTPDSKPAMVAEDYANRLRKNLKKFEKWARQEGIECYRLYDADLPEYNVAVDRYADWVVVQEYAPPKTIDAHKARQRLFDIIAATISVLGIAPNKLVLKTRERHKGKNQYQKLGEKGEFLEVTEYNAHLWVNLTDYLDTGLFLDHRIARRMLGQMSKGKDFLNLFSYTGSATVHAGLGGARSTTTVDMSRTYLEWAERNLRLNGLTRRAHRLIQADCLAWLREANEQFDLIFIDPPTFSNSKRMEDAFDVQRDHLALMKDLKRLLRAGGTIMFSNNKRGFRMDLDGLAKLGLKAQEITQKTLSQDFARNRQIHNCWLITAA.

One can recognise a THUMP domain in the interval 43–154; it reads LVYQSLMWSR…KETASIALDL (112 aa).

The protein belongs to the methyltransferase superfamily. RlmKL family.

It is found in the cytoplasm. It catalyses the reaction guanosine(2445) in 23S rRNA + S-adenosyl-L-methionine = N(2)-methylguanosine(2445) in 23S rRNA + S-adenosyl-L-homocysteine + H(+). The catalysed reaction is guanosine(2069) in 23S rRNA + S-adenosyl-L-methionine = N(2)-methylguanosine(2069) in 23S rRNA + S-adenosyl-L-homocysteine + H(+). Specifically methylates the guanine in position 2445 (m2G2445) and the guanine in position 2069 (m7G2069) of 23S rRNA. This Shigella flexneri serotype 5b (strain 8401) protein is Ribosomal RNA large subunit methyltransferase K/L.